The sequence spans 173 residues: uncharacterized protein (173 aa).

Positions 1-11 are enriched in basic and acidic residues; the sequence is MLCAKNKKDPK. The interval 1-173 is disordered; sequence MLCAKNKKDP…EKMEKSEKAY (173 aa). A compositionally biased stretch (polar residues) spans 17–41; sequence FSETSKVQNVQNTQPKPAAPSQMSI. 2 stretches are compositionally biased toward basic and acidic residues: residues 56-109 and 120-144; these read KSVE…KADN and AKKEQEEENPKTDLESHKDEAEAKK. Residues 145 to 156 are compositionally biased toward basic residues; it reads KESRRQKKMRNK. Residues 157–173 show a composition bias toward basic and acidic residues; the sequence is NSKEGSVEKMEKSEKAY.

This is an uncharacterized protein from Caenorhabditis elegans.